Reading from the N-terminus, the 272-residue chain is U11/U12 small nuclear ribonucleoprotein 35 kDa protein (272 aa).

The RRM domain maps to 51 to 129; sequence LTLFVSRLSP…REVFVDFELE (79 aa). Basic and acidic residues-rich tracts occupy residues 146 to 162 and 190 to 272; these read GKKESGQLRFGGRDRPF and RDRS…EHNR. Residues 146-272 are disordered; the sequence is GKKESGQLRF…RKHRSDEHNR (127 aa). The stretch at 221 to 258 forms a coiled coil; sequence TKDDKEQNAEHTKRERSREQAKNDKDKEKKDSKRERSR.

The protein localises to the nucleus. The protein is U11/U12 small nuclear ribonucleoprotein 35 kDa protein (snrnp35) of Xenopus laevis (African clawed frog).